We begin with the raw amino-acid sequence, 618 residues long: Probable arginine--tRNA ligase, cytoplasmic (618 aa).

Interaction with tRNA regions lie at residues 60 to 61 (ET) and 104 to 109 (NGIFLR). Residues 146–151 (EFSSPN), His160, Tyr359, Asp363, and Gln387 contribute to the L-arginine site. The 'HIGH' region motif lies at 149–160 (SPNIAKPFHAGH). The interval 496 to 510 (DTGPYLQYAHSRLSS) is interaction with tRNA.

It belongs to the class-I aminoacyl-tRNA synthetase family.

It is found in the cytoplasm. It carries out the reaction tRNA(Arg) + L-arginine + ATP = L-arginyl-tRNA(Arg) + AMP + diphosphate. In terms of biological role, forms part of a macromolecular complex that catalyzes the attachment of specific amino acids to cognate tRNAs during protein synthesis. The polypeptide is Probable arginine--tRNA ligase, cytoplasmic (mrs1) (Schizosaccharomyces pombe (strain 972 / ATCC 24843) (Fission yeast)).